A 67-amino-acid polypeptide reads, in one-letter code: Lantibiotic Flvbeta.b (67 aa).

The propeptide at 1–34 (MDNNTKLQKLYEQLAATGSEKELDAMLDENMAGA) is cleaved by FlvT. At S36 the chain carries 2,3-didehydroalanine (Ser); by FlvM2. 2,3-didehydrobutyrine; by FlvM2 is present on residues T39 and T43. 3 consecutive cross-links (beta-methyllanthionine (Thr-Cys); by FlvM2) follow at residues 50–56 (TTGFDWC), 58–61 (TGAC), and 62–65 (TYSC).

Contains DL-beta-methyllanthionine, when coepressed in E.coli with the flavecin synthetase FlvM2.

The protein resides in the secreted. Its function is as follows. Lanthionine-containing peptide antibiotic (lantibiotic) only active on Gram-positive bacteria in synergy with Flvalpha.a. Is not active in absence of Flvalpha.a, which is encoded by the same operon than Flvbeta.b. The bactericidal activity of lantibiotics is based on depolarization of energized bacterial cytoplasmic membranes, initiated by the formation of aqueous transmembrane pores. This chain is Lantibiotic Flvbeta.b, found in Ruminococcus flavefaciens.